A 483-amino-acid chain; its full sequence is Glycogen synthase (483 aa).

Residue Lys-18 participates in ADP-alpha-D-glucose binding.

This sequence belongs to the glycosyltransferase 1 family. Bacterial/plant glycogen synthase subfamily.

The catalysed reaction is [(1-&gt;4)-alpha-D-glucosyl](n) + ADP-alpha-D-glucose = [(1-&gt;4)-alpha-D-glucosyl](n+1) + ADP + H(+). The protein operates within glycan biosynthesis; glycogen biosynthesis. In terms of biological role, synthesizes alpha-1,4-glucan chains using ADP-glucose. The polypeptide is Glycogen synthase (Methylocella silvestris (strain DSM 15510 / CIP 108128 / LMG 27833 / NCIMB 13906 / BL2)).